We begin with the raw amino-acid sequence, 363 residues long: 3-dehydroquinate synthase (363 aa).

NAD(+) contacts are provided by residues 72-77 (SGEKEK), 130-131 (TT), Lys-142, and Lys-151. Residues Glu-184, His-247, and His-264 each coordinate Zn(2+).

The protein belongs to the sugar phosphate cyclases superfamily. Dehydroquinate synthase family. Requires Co(2+) as cofactor. It depends on Zn(2+) as a cofactor. NAD(+) is required as a cofactor.

It localises to the cytoplasm. It carries out the reaction 7-phospho-2-dehydro-3-deoxy-D-arabino-heptonate = 3-dehydroquinate + phosphate. It functions in the pathway metabolic intermediate biosynthesis; chorismate biosynthesis; chorismate from D-erythrose 4-phosphate and phosphoenolpyruvate: step 2/7. Catalyzes the conversion of 3-deoxy-D-arabino-heptulosonate 7-phosphate (DAHP) to dehydroquinate (DHQ). This Bacillus anthracis (strain A0248) protein is 3-dehydroquinate synthase.